The sequence spans 70 residues: MIMRMTLTLFVLVVMTAASASGDALTEAKRIPYCGQTGAECYSWCKEQHLIRCCDFVKYVGMNPPADKCR.

The N-terminal stretch at 1–22 is a signal peptide; sequence MIMRMTLTLFVLVVMTAASASG. A propeptide spanning residues 23-28 is cleaved from the precursor; the sequence is DALTEA. Cystine bridges form between Cys34–Cys41, Cys45–Cys53, and Cys54–Cys69.

The protein belongs to the conotoxin K superfamily. Expressed by the venom duct.

The protein resides in the secreted. Functionally, neurotoxin that induces excitatory symptoms in mice following intracranial administration. No symptoms are observed after intraperitoneal and intravenous (tail vein) injections. The chain is Conotoxin Im23.3 from Conus imperialis (Imperial cone).